We begin with the raw amino-acid sequence, 861 residues long: Glucans biosynthesis glucosyltransferase H (861 aa).

6 helical membrane-spanning segments follow: residues 142–162 (FILLLLMLAQTSVATYYMKGI), 188–208 (VLPYVIQFGILALFAILFCWV), 516–536 (VFLTGVMSYLSAPLWFFFLVL), 573–593 (LFSTTLTLLFLPKLLSVMLIW), 600–620 (FGGVIRVTLSMLLEMFFSVLL), and 683–703 (FLWWLSPIVGSLILSIPVSVI).

It belongs to the glycosyltransferase 2 family. OpgH subfamily.

The protein resides in the cell inner membrane. It participates in glycan metabolism; osmoregulated periplasmic glucan (OPG) biosynthesis. Its function is as follows. Involved in the biosynthesis of osmoregulated periplasmic glucans (OPGs). The sequence is that of Glucans biosynthesis glucosyltransferase H from Pseudomonas aeruginosa (strain LESB58).